Reading from the N-terminus, the 258-residue chain is Imidazole glycerol phosphate synthase subunit HisF (258 aa).

Catalysis depends on residues aspartate 11 and aspartate 130.

The protein belongs to the HisA/HisF family. In terms of assembly, heterodimer of HisH and HisF.

The protein resides in the cytoplasm. It catalyses the reaction 5-[(5-phospho-1-deoxy-D-ribulos-1-ylimino)methylamino]-1-(5-phospho-beta-D-ribosyl)imidazole-4-carboxamide + L-glutamine = D-erythro-1-(imidazol-4-yl)glycerol 3-phosphate + 5-amino-1-(5-phospho-beta-D-ribosyl)imidazole-4-carboxamide + L-glutamate + H(+). It functions in the pathway amino-acid biosynthesis; L-histidine biosynthesis; L-histidine from 5-phospho-alpha-D-ribose 1-diphosphate: step 5/9. Functionally, IGPS catalyzes the conversion of PRFAR and glutamine to IGP, AICAR and glutamate. The HisF subunit catalyzes the cyclization activity that produces IGP and AICAR from PRFAR using the ammonia provided by the HisH subunit. The chain is Imidazole glycerol phosphate synthase subunit HisF from Baumannia cicadellinicola subsp. Homalodisca coagulata.